We begin with the raw amino-acid sequence, 228 residues long: Urease accessory protein UreE (228 aa).

The interval 188–228 (PLDEPHGSGLHIHAIHSHGDGHSHDHDHSHSHGDHDHDHKH) is disordered. Over residues 204–228 (SHGDGHSHDHDHSHSHGDHDHDHKH) the composition is skewed to basic and acidic residues.

Belongs to the UreE family.

It is found in the cytoplasm. Involved in urease metallocenter assembly. Binds nickel. Probably functions as a nickel donor during metallocenter assembly. This is Urease accessory protein UreE from Yersinia kristensenii.